A 184-amino-acid chain; its full sequence is ADP-ribosylation factor-like protein 2 (184 aa).

Gly2 is lipidated: N-myristoyl glycine. Residues 23-30 (GLDNAGKT), 66-70 (DIGGQ), and 125-128 (NKQD) each bind GTP.

This sequence belongs to the small GTPase superfamily. Arf family.

Its function is as follows. May be involved in trafficking events within the endosomal system. In Dictyostelium discoideum (Social amoeba), this protein is ADP-ribosylation factor-like protein 2 (arl2).